The sequence spans 322 residues: Protein CCC1 (322 aa).

Residues 1 to 99 are Cytoplasmic-facing; that stretch reads MSIVALKNAV…LGFFQSVDPR (99 aa). The segment at 19–86 is disordered; it reads GSGGTSELGG…RNGDNGSDNE (68 aa). A compositionally biased stretch (low complexity) spans 26-53; it reads LGGSESTPLLRGSNSNSSRHDNLSSSSS. 5 positions are modified to phosphoserine: Ser29, Ser53, Ser68, Ser71, and Ser83. Over residues 60–70 the composition is skewed to polar residues; it reads NSAQDLENSPM. Residues 100 to 120 form a helical membrane-spanning segment; the sequence is VISDLIIGLSDGLTVPFALTA. Over 121-129 the chain is Vacuolar; it reads GLSSLGDAK. The chain crosses the membrane as a helical span at residues 130–150; the sequence is LVITGGFAELISGAISMGLGG. Residues 151 to 236 lie on the Cytoplasmic side of the membrane; the sequence is YLGAKSESDY…PAENRELISA (86 aa). Residues 237-257 traverse the membrane as a helical segment; the sequence is VTIGGGYLLGGLVPLVPYFFV. Over 258-259 the chain is Vacuolar; the sequence is SD. A helical membrane pass occupies residues 260–280; the sequence is VGTGLIYSIIVMVVTLFWFGY. The Cytoplasmic segment spans residues 281–300; that stretch reads VKTKLSMGSGSSTSKKVTEG. The helical transmembrane segment at 301-321 threads the bilayer; sequence VEMVVVGGVAAGAAWFFVKLL. A topological domain (vacuolar) is located at residue Gly322.

It belongs to the CCC1 family.

It is found in the golgi apparatus membrane. Its subcellular location is the vacuole membrane. The enzyme catalyses Fe(2+)(in) = Fe(2+)(out). Has a role in both calcium and manganese homeostasis. Involved in the transfer of iron and Mn(2+) from the cytosol to the vacuole for storage of these metals. The sequence is that of Protein CCC1 (CCC1) from Saccharomyces cerevisiae (strain ATCC 204508 / S288c) (Baker's yeast).